Reading from the N-terminus, the 128-residue chain is Lutropin subunit beta (128 aa).

Positions 1 to 20 are cleaved as a signal peptide; it reads MERLQGLLLWLLLSPSVVWA. 5 disulfide bridges follow: Cys29–Cys77, Cys43–Cys92, Cys54–Cys108, Cys58–Cys110, and Cys113–Cys120. Residue Asn33 is glycosylated (N-linked (GlcNAc...) asparagine).

This sequence belongs to the glycoprotein hormones subunit beta family. As to quaternary structure, heterodimer of a common alpha chain and a unique beta chain which confers biological specificity to thyrotropin, lutropin, follitropin and gonadotropin.

The protein resides in the secreted. Functionally, promotes spermatogenesis and ovulation by stimulating the testes and ovaries to synthesize steroids. This is Lutropin subunit beta (LHB) from Phodopus sungorus (Striped hairy-footed hamster).